Here is a 262-residue protein sequence, read N- to C-terminus: Proline-rich protein 23C (262 aa).

Disordered stretches follow at residues 1 to 52 (MGSR…AGTP) and 225 to 262 (VPSS…LFQE). Pro residues predominate over residues 226 to 242 (PSSPLQPLPPSPSPGPH). Basic and acidic residues predominate over residues 243-252 (ARPELPERPP). Positions 253–262 (CKVRRRLFQE) are enriched in basic residues.

This sequence belongs to the PRR23 family.

This Homo sapiens (Human) protein is Proline-rich protein 23C (PRR23C).